The chain runs to 465 residues: Methionine aminopeptidase 2-2 (465 aa).

Residues 1–13 are compositionally biased toward basic and acidic residues; it reads MGSKTPNDHRRGP. Residues 1–92 are disordered; it reads MGSKTPNDHR…KKKTLLGGLQ (92 aa). The span at 44 to 55 shows a compositional bias: acidic residues; the sequence is GETEDGEDEDDD. Positions 71–86 are enriched in basic residues; that stretch reads TKKKNKRKKNKKKKKT. H217 contributes to the substrate binding site. Residues D238, D249, and H318 each coordinate a divalent metal cation. H326 lines the substrate pocket. A divalent metal cation is bound by residues E351 and E446.

It belongs to the peptidase M24A family. Methionine aminopeptidase eukaryotic type 2 subfamily. Co(2+) serves as cofactor. Requires Zn(2+) as cofactor. The cofactor is Mn(2+). Fe(2+) is required as a cofactor.

It localises to the cytoplasm. It catalyses the reaction Release of N-terminal amino acids, preferentially methionine, from peptides and arylamides.. Its function is as follows. Cotranslationally removes the N-terminal methionine from nascent proteins. The N-terminal methionine is often cleaved when the second residue in the primary sequence is small and uncharged (Met-Ala-, Cys, Gly, Pro, Ser, Thr, or Val). This Blastomyces gilchristii (strain SLH14081) (Blastomyces dermatitidis) protein is Methionine aminopeptidase 2-2.